A 337-amino-acid chain; its full sequence is MEQPWPPPGPWSLPRAEGEAEEENDLDVFPSSPRCPQLPGGSAQMYSHGIELACQKQKEFVKSSVACKWNLAEAQQKLGSLALHNSESLDQEHAKAQIAVSELRQREEEWRQKEEALVQREKMCLWSMDAISKDVFNKSFINQDKRKDTEDEDKSESFMQKYEQKIRHFGMLSRWDDSQRFLSDHPYLVCEETAKYLILWCFHLEAEKKGALMEQIAHQAVVMQFIMEMAKNCNVDPRGCFRLFFQKAKAEEEGYFEAFKNELEAFKSRVRLYSQSQSFQPMTVQNHVPHSGVGSIGLLESLPQNPDYLQYSINTALCSLNSVVHKEDDEPKMMDTV.

Pro residues predominate over residues 1–11 (MEQPWPPPGPW). Residues 1–42 (MEQPWPPPGPWSLPRAEGEAEEENDLDVFPSSPRCPQLPGGS) form a disordered region. The segment at 2 to 171 (EQPWPPPGPW…YEQKIRHFGM (170 aa)) is self-association. Ser32 and Ser88 each carry phosphoserine. Residues 85 to 122 (NSESLDQEHAKAQIAVSELRQREEEWRQKEEALVQREK) are a coiled coil. The self-association and interaction with Hsp90 stretch occupies residues 147-277 (KDTEDEDKSE…SRVRLYSQSQ (131 aa)). The interaction with Hsp70 stretch occupies residues 267–337 (KSRVRLYSQS…DDEPKMMDTV (71 aa)). The segment at 278–337 (SFQPMTVQNHVPHSGVGSIGLLESLPQNPDYLQYSINTALCSLNSVVHKEDDEPKMMDTV) is required for interaction with STIP1.

This sequence belongs to the CDC37 family. Self-associates. Forms complexes with Hsp70 and Hsp90. Interacts with CDC37, FKBP4, PPID and STIP1.

It localises to the cytoplasm. Functionally, co-chaperone that binds to numerous proteins and promotes their interaction with Hsp70 and Hsp90. This Pongo abelii (Sumatran orangutan) protein is Hsp90 co-chaperone Cdc37-like 1 (CDC37L1).